Consider the following 222-residue polypeptide: Small ribosomal subunit protein uS5 (222 aa).

Positions 1-41 are disordered; that stretch reads MAEQAGAGSAQDNRGGGRDDRGGRGRRDDRGGRGGRDDREK. The segment covering 15–41 has biased composition (basic and acidic residues); sequence GGGRDDRGGRGRRDDRGGRGGRDDREK. The S5 DRBM domain occupies 44 to 107; the sequence is YLERVVTINR…EEARKNFFRV (64 aa).

Belongs to the universal ribosomal protein uS5 family. In terms of assembly, part of the 30S ribosomal subunit. Contacts proteins S4 and S8.

With S4 and S12 plays an important role in translational accuracy. Its function is as follows. Located at the back of the 30S subunit body where it stabilizes the conformation of the head with respect to the body. The chain is Small ribosomal subunit protein uS5 from Mycolicibacterium gilvum (strain PYR-GCK) (Mycobacterium gilvum (strain PYR-GCK)).